Consider the following 45-residue polypeptide: Photosystem II reaction center protein K (45 aa).

Positions 1–8 (MDFALLLA) are excised as a propeptide. Residues 24 to 44 (LPLIPLFFLLLAFVWQAAVGF) traverse the membrane as a helical segment.

The protein belongs to the PsbK family. PSII is composed of 1 copy each of membrane proteins PsbA, PsbB, PsbC, PsbD, PsbE, PsbF, PsbH, PsbI, PsbJ, PsbK, PsbL, PsbM, PsbT, PsbX, PsbY, PsbZ, Psb30/Ycf12, peripheral proteins PsbO, CyanoQ (PsbQ), PsbU, PsbV and a large number of cofactors. It forms dimeric complexes.

It localises to the cellular thylakoid membrane. In terms of biological role, one of the components of the core complex of photosystem II (PSII). PSII is a light-driven water:plastoquinone oxidoreductase that uses light energy to abstract electrons from H(2)O, generating O(2) and a proton gradient subsequently used for ATP formation. It consists of a core antenna complex that captures photons, and an electron transfer chain that converts photonic excitation into a charge separation. This Gloeothece citriformis (strain PCC 7424) (Cyanothece sp. (strain PCC 7424)) protein is Photosystem II reaction center protein K.